The following is a 373-amino-acid chain: DNA dC-&gt;dU-editing enzyme APOBEC-3F (373 aa).

CMP/dCMP-type deaminase domains lie at 29-137 (RRNT…LCRL) and 174-321 (DDNY…LRSL). Residue Lys52 forms a (Microbial infection) Glycyl lysine isopeptide (Lys-Gly) (interchain with G-Cter in ubiquitin) linkage. Residues His65, Cys96, and Cys99 each coordinate Zn(2+). Residue Lys234 forms a (Microbial infection) Glycyl lysine isopeptide (Lys-Gly) (interchain with G-Cter in ubiquitin) linkage. His249 provides a ligand contact to Zn(2+). Residue Glu251 is the Proton donor of the active site. Positions 280 and 283 each coordinate Zn(2+). Cys280 and Cys283 are joined by a disulfide. Residues Lys334, Lys352, Lys355, and Lys358 each participate in a (Microbial infection) Glycyl lysine isopeptide (Lys-Gly) (interchain with G-Cter in ubiquitin) cross-link.

Belongs to the cytidine and deoxycytidylate deaminase family. As to quaternary structure, homodimer. Interacts with APOBEC3G in an RNA-dependent manner. Interacts with AGO1, AGO2 and AGO3. In terms of assembly, (Microbial infection) Interacts with HIV-1 Vif, leading to its ubiquitination and degradation by the proteasome. In the absence of Vif protein, specifically packaged into HIV-1 virions. Zn(2+) serves as cofactor. (Microbial infection) Following infection by HIV-1, ubiquitinated by a cullin-5-RING E3 ubiquitin-protein ligase complex (ECS complex) hijacked by the HIV-1 Vif protein, leading to its degradation. In terms of tissue distribution, widely expressed. Highly expressed in ovary.

It localises to the cytoplasm. The protein resides in the P-body. It catalyses the reaction a 2'-deoxycytidine in single-stranded DNA + H2O + H(+) = a 2'-deoxyuridine in single-stranded DNA + NH4(+). Its activity is regulated as follows. (Microbial infection) Antiviral activity is neutralized by the HIV-1 virion infectivity factor (Vif), that prevents its incorporation into progeny virions by both inhibiting its translation and/or by inducing its ubiquitination and subsequent degradation by the 26S proteasome. Its function is as follows. DNA deaminase (cytidine deaminase) which acts as an inhibitor of retrovirus replication and retrotransposon mobility via deaminase-dependent and -independent mechanisms. Exhibits antiviral activity against viruse such as HIV-1 or HIV-2. After the penetration of retroviral nucleocapsids into target cells of infection and the initiation of reverse transcription, it can induce the conversion of cytosine to uracil in the minus-sense single-strand viral DNA, leading to G-to-A hypermutations in the subsequent plus-strand viral DNA. The resultant detrimental levels of mutations in the proviral genome, along with a deamination-independent mechanism that works prior to the proviral integration, together exert efficient antiretroviral effects in infected target cells. Selectively targets single-stranded DNA and does not deaminate double-stranded DNA or single- or double-stranded RNA. Exhibits antiviral activity also against hepatitis B virus (HBV), equine infectious anemia virus (EIAV), xenotropic MuLV-related virus (XMRV) and simian foamy virus (SFV) and may inhibit the mobility of LTR and non-LTR retrotransposons. May also play a role in the epigenetic regulation of gene expression through the process of active DNA demethylation. The polypeptide is DNA dC-&gt;dU-editing enzyme APOBEC-3F (Homo sapiens (Human)).